Consider the following 230-residue polypeptide: CDP-diacylglycerol--inositol 3-phosphatidyltransferase (230 aa).

Over 1–28 the chain is Cytoplasmic; that stretch reads MPSAKSSDLSPTKTNLESTTKQKVSVQD. Residues 29–51 form a helical membrane-spanning segment; it reads IFLYIPNLIGYLRIITAIISFLC. Over 52–57 the chain is Lumenal; sequence MANHPV. Residues 58-77 traverse the membrane as a helical segment; the sequence is ATLIFYGISGFLDAFDGYAA. Residues Asp-70 and Asp-73 each coordinate Mg(2+). The a CDP-1,2-diacyl-sn-glycerol site is built by Gly-74, Arg-78, and Thr-84. The Cytoplasmic segment spans residues 78–89; that stretch reads RKFNQGTRFGAV. A helical membrane pass occupies residues 90–110; sequence LDMVTDRCATSSLIVYLGVLY. Positions 91 and 95 each coordinate Mg(2+). Asp-95 serves as the catalytic Proton acceptor. At 111–112 the chain is on the lumenal side; it reads PQ. A helical membrane pass occupies residues 113-133; sequence YTVFWQILVSLDLSSHYMHMY. The Cytoplasmic segment spans residues 134-161; it reads AMLSAGSTSHKNVDETQSKLLSLYYNNR. Residues 162-182 traverse the membrane as a helical segment; it reads LVLFFVCLINELFYMAVYLHY. Residues 183 to 184 lie on the Lumenal side of the membrane; it reads YK. The helical transmembrane segment at 185–205 threads the bilayer; the sequence is FFWLGTVMLVASTPIWLFKQI. Residues 206 to 230 lie on the Cytoplasmic side of the membrane; the sequence is ANIIQLKNASLILARMDAHDHSKRD.

Belongs to the CDP-alcohol phosphatidyltransferase class-I family. It depends on Mn(2+) as a cofactor. The cofactor is Mg(2+).

Its subcellular location is the endoplasmic reticulum membrane. The catalysed reaction is a CDP-1,2-diacyl-sn-glycerol + myo-inositol = a 1,2-diacyl-sn-glycero-3-phospho-(1D-myo-inositol) + CMP + H(+). Its activity is regulated as follows. Inhibited by calcium and zinc ions. Inhibited by nucleoside triphosphates and diphosphates. In terms of biological role, catalyzes the synthesis of phosphatidylinositol (PtdIns). Required for proper membrane dynamics and cell wall integrity. The polypeptide is CDP-diacylglycerol--inositol 3-phosphatidyltransferase (Candida albicans (strain SC5314 / ATCC MYA-2876) (Yeast)).